The primary structure comprises 1856 residues: MVDKNIYIIQGEINIVVGAIKRNARWSTHIPLDEERDPLLHSFSHLKEVLNSVTELSEIEPNVFLRPFLEVIRSEDTTGPITGLALTSVNKFLSYALIDPTHEGTAEGMENMADAVTHARFVGTDPASDEVVLMKILQVLRTLLLTPVGTHLTNESVCEIMQSCFRICFEMRLSELLRKSAEHTLVDMVQLLFTRLPQFKEEPKSYVGTNMKKLKMRAGGMSDSSKWKKQKRSPRPPRHMTRVTPGSELPAPNGATLSCNLTSGMPFIDVPSSISSASSEAASAVVSPCTDSGLELSSQTTSKEDLTDLEQAGSPRESTTTESGSNEIGVSDQLDPQEGSHVEKAQSASVESIPEVLEECTSPPDHSASVHDMDYVNPRGVRFTQSSQKEGTALVPYGLPCIRELFRFLISLTNPHDRHNSEGMIHMGLHLLTVALESAPVAQCQTLLGLIKDEMCRHLFQLLSVERLNLYAASLRVCFLLFESMREHLKFQLEMYMKKLMEIITVENPKMPYEMKEMALEAIVQLWRIPSFVTELYINYDCDYYCANLFEDLTKLLSKNAFPVSGQLYTTHLLSLDALLTVIDSTEAHCQAKVLNTLTQQEKKETSRPSYEAVDSTQEANSTERATIDGKATGMASDALGLHLQSGGWLSAEHGKPRCNDVEEAGDSGADKKFTRKPPRFSCLLPDPRELIEIKNKKKLLITGTEQFNQKPKKGIQFLQEKGLLTIPMDNTEVAQWLRENPRLDKKMIGEFVSDRKNIDLLESFVSTFSFQGLRLDEALRLYLEAFRLPGEAPVIHRLLEAFTEHWRSCNGSPFANSDACFALAYAVIMLNTDQHNHNVRKQNVPMTLEEFRKNLKGVNGGKDFEQDILEDMYHAIKNEEIVMPEEQTGLVRENYVWSVLLHRGATPEGIFLRVPPGSYDLDLFTMTWGPTIAALSYVFDKSIEETIIQKAISGFRKCAMISAHYGLSDVFDNLIISLCKFTALSSESIENLPTVFGSNPKAHIAAKTVFHLAHRHGDILREGWKNIMEAVLQLFRAQLLPQAMVEVEDFVDPNGKISLQREEMPSNRGESSVLSFVSWLTLSGPEQSSVRGPSTENQEAKRVALDCIKQCDPEKMITESKFLQLESLQELMKALVSVTADEETYDEEDAAFCLEMLLRIVLENRDRVGCVWQTVRDHLYHLCVQAQDFCFLVERAVVGLLRLAIRLLRREEISGQVLLSLRILLLMKPSVLSRVSHQVAYGLHELLKTNAANIHSGDDWATLFTLLECIGSGVKPPDALQATARADAPDAGAQSDSELPSYHQNDVSLDRGYTSDSEVYTDHGRPGKIHRSATDADMVNSGWLVVGKDDIDNSKAGAGLSRPSPSPLVNQYSLTVGLDLGPHDTKSLLKCVESLSFIVRDAAHITPDNFELCVKTLRIFVEASLNGGCKSQDKRGKSHKYDSKGNRFKKKPKEGSVLRRPRTSSQHGTRGGHSDEEEDEGVPASYHTVSLQVSQDLLDLMHTLHTRAASIYSSWAEEQRHLESGGRKIEADSRTLWAHCWCPLLQGIACLCCDARRQVRMQALTYLQRALLVHDLQKLDALEWESCFNKVLFPLLTKLLENISPADVGGMEETRMRASTLLSKVFLQHLSPLLSLSTFAALWLTILDFMDKYMHAGSSDLLSEAIPESLKNMLLVMDTAEIFHSADARGGSPSALWEITWERIDCFLPHLRDELFKQTVIQDPMPTEPHSQNALASTHLTPAAGDPGHLPSPEIPSEVGACDSEKPEGTRATSSSSPGSPVASSPSRLSPSPEGPPPLAQPPLILQPLTSPLQVGVPPMALPIILNPALIEATSPVPLLSTPRPTDPIPTSEVN.

Residues M1 to M211 form a DCB (dimerization and cyclophiln-binding); DCB:DCB domain and DCB:HUS domain interaction region. Positions M1–P378 are interaction with RAB1B. Disordered stretches follow at residues K215 to T256 and D291 to V370. Positions W227–T241 are enriched in basic residues. The span at R316–I328 shows a compositional bias: polar residues. S349 and S352 each carry phosphoserine. Position 505 is a phosphothreonine (T505). The HUS (homology upstream of Sec7); DCB:HUS domain interaction stretch occupies residues R528–N548. The tract at residues Q601–A626 is disordered. The span at D615–R625 shows a compositional bias: polar residues. Residues E690–E880 form the SEC7 domain. A phosphatidylinositol-phosphate binding; required for translocation to the leading edge and for ARF1 activation upon GPCR signaling region spans residues M884–V1370. Residues T1284–A1294 show a composition bias toward low complexity. Residues T1284–S1333 are disordered. A compositionally biased stretch (polar residues) spans Q1295–V1308. S1296 bears the Phosphoserine mark. A Phosphotyrosine modification is found at Y1314. Phosphoserine occurs at positions 1316, 1318, and 1333. T1335 carries the post-translational modification Phosphothreonine; by AMPK. 3 disordered regions span residues C1430–P1484, T1739–I1806, and P1837–N1856. Residues S1432 to G1446 show a composition bias toward basic and acidic residues. S1475 and S1781 each carry phosphoserine. A compositionally biased stretch (low complexity) spans S1775 to S1793.

Can form homodimers and probably homotetramers. Interacts with COPG1; the interaction is independent on ARF1 activation. Interacts with ARF1, ARF3, ARF4 and ARF5. Interacts with RAB1B (GTP-bound form); required for GBF1 membrane association. Interacts with GGA1, GGA2 and GGA3. Interacts with USO1. Interacts (via SEC7 domain) with PNPLA2 (via C-terminus); the interaction is direct. Can form homodimers and probably homotetramers. Interacts with COPG1; the interaction is independent on ARF1 activation. Interacts with ARF1, ARF3, ARF4 and ARF5. Interacts with RAB1B (GTP-bound form); required for GBF1 membrane association. Interacts with GGA1, GGA2 and GGA3. Interacts with USO1. Interacts (via SEC7 domain) with PNPLA2 (via C-terminus); the interaction is direct. Interacts with ARMH3.

It is found in the golgi apparatus. The protein localises to the cis-Golgi network. It localises to the endoplasmic reticulum-Golgi intermediate compartment. Its subcellular location is the trans-Golgi network. The protein resides in the cytoplasm. It is found in the lipid droplet. The protein localises to the membrane. Inhibited by brefeldin A (BFA). Inhibited by golgicide A (GCA). Guanine-nucleotide exchange factor (GEF) for members of the Arf family of small GTPases involved in trafficking in the early secretory pathway; its GEF activity initiates the coating of nascent vesicles via the localized generation of activated ARFs through replacement of GDP with GTP. Recruitment to cis-Golgi membranes requires membrane association of Arf-GDP and can be regulated by ARF1, ARF3, ARF4 and ARF5. Involved in the recruitment of the COPI coat complex to cellular membranes such as the endoplasmic reticulum exit sites (ERES), and the endoplasmic reticulum-Golgi intermediate (ERGIC) and cis-Golgi compartments implicating ARF1 activation. Involved in COPI vesicle-dependent retrograde transport from the ERGIC and cis-Golgi compartments to the endoplasmic reticulum (ER). Involved in the trans-Golgi network recruitment of GGA1, GGA2, GGA3, BIG1, BIG2, and the AP-1 adaptor protein complex related to chlathrin-dependent transport; the function requires its GEF activity (probably at least in part on ARF4 and ARF5). Has GEF activity towards ARF1. Has in vitro GEF activity towards ARF5. Involved in the processing of PSAP. Required for the assembly of the Golgi apparatus. The AMPK-phosphorylated form is involved in Golgi disassembly during mitotis and under stress conditions. May be involved in the COPI vesicle-dependent recruitment of PNPLA2 to lipid droplets. In neutrophils, involved in G protein-coupled receptor (GPCR)-mediated chemotaxis und superoxide production. Proposed to be recruited by phosphatidylinositol-phosphates generated upon GPCR stimulation to the leading edge where it recruits and activates ARF1, and is involved in recruitment of GIT2 and the NADPH oxidase complex. Plays a role in maintaining mitochondrial morphology. This chain is Golgi-specific brefeldin A-resistance guanine nucleotide exchange factor 1 (GBF1), found in Cricetulus griseus (Chinese hamster).